The chain runs to 296 residues: Chronophin (296 aa).

The active-site Nucleophile is Asp25. The Mg(2+) site is built by Asp25 and Asp27. Asp27 acts as the Proton donor in catalysis. Substrate-binding positions include 58–60, His182, and Lys213; that span reads SNN. Asp238 provides a ligand contact to Mg(2+).

This sequence belongs to the HAD-like hydrolase superfamily. In terms of assembly, homodimer. Requires Mg(2+) as cofactor. Ubiquitously expressed (at protein level). Highly expressed in all the regions of central nerve system except the spinal cord. Also expressed at high level in liver and testis. In fetus, it is weakly expressed in all organs except brain.

It localises to the cytoplasm. The protein resides in the cytosol. Its subcellular location is the cytoskeleton. The protein localises to the cell projection. It is found in the ruffle membrane. It localises to the lamellipodium membrane. The protein resides in the cell membrane. It catalyses the reaction pyridoxal 5'-phosphate + H2O = pyridoxal + phosphate. It carries out the reaction pyridoxine 5'-phosphate + H2O = pyridoxine + phosphate. The catalysed reaction is pyridoxamine + phosphate = pyridoxamine 5'-phosphate + H2O. The enzyme catalyses O-phospho-L-seryl-[protein] + H2O = L-seryl-[protein] + phosphate. Its activity is regulated as follows. Inhibited by NaF, Zn(2+), Ca(2+), Mn(2+) and EDTA. Its function is as follows. Functions as a pyridoxal phosphate (PLP) phosphatase, which also catalyzes the dephosphorylation of pyridoxine 5'-phosphate (PNP) and pyridoxamine 5'-phosphate (PMP), with order of substrate preference PLP &gt; PNP &gt; PMP and therefore plays a role in vitamin B6 metabolism. Also functions as a protein serine phosphatase that specifically dephosphorylates 'Ser-3' in proteins of the actin-depolymerizing factor (ADF)/cofilin family like CFL1 and DSTN. Thereby, regulates cofilin-dependent actin cytoskeleton reorganization, being required for normal progress through mitosis and normal cytokinesis. Does not dephosphorylate phosphothreonines in LIMK1. Does not dephosphorylate peptides containing phosphotyrosine. In Homo sapiens (Human), this protein is Chronophin.